Here is a 301-residue protein sequence, read N- to C-terminus: Phosphatidylserine decarboxylase proenzyme (301 aa).

Active-site charge relay system; for autoendoproteolytic cleavage activity residues include D117, H173, and S260. The Schiff-base intermediate with substrate; via pyruvic acid; for decarboxylase activity role is filled by S260. Pyruvic acid (Ser); by autocatalysis is present on S260.

It belongs to the phosphatidylserine decarboxylase family. PSD-B subfamily. Prokaryotic type II sub-subfamily. Heterodimer of a large membrane-associated beta subunit and a small pyruvoyl-containing alpha subunit. Pyruvate is required as a cofactor. Post-translationally, is synthesized initially as an inactive proenzyme. Formation of the active enzyme involves a self-maturation process in which the active site pyruvoyl group is generated from an internal serine residue via an autocatalytic post-translational modification. Two non-identical subunits are generated from the proenzyme in this reaction, and the pyruvate is formed at the N-terminus of the alpha chain, which is derived from the carboxyl end of the proenzyme. The autoendoproteolytic cleavage occurs by a canonical serine protease mechanism, in which the side chain hydroxyl group of the serine supplies its oxygen atom to form the C-terminus of the beta chain, while the remainder of the serine residue undergoes an oxidative deamination to produce ammonia and the pyruvoyl prosthetic group on the alpha chain. During this reaction, the Ser that is part of the protease active site of the proenzyme becomes the pyruvoyl prosthetic group, which constitutes an essential element of the active site of the mature decarboxylase.

Its subcellular location is the cell membrane. The enzyme catalyses a 1,2-diacyl-sn-glycero-3-phospho-L-serine + H(+) = a 1,2-diacyl-sn-glycero-3-phosphoethanolamine + CO2. It participates in phospholipid metabolism; phosphatidylethanolamine biosynthesis; phosphatidylethanolamine from CDP-diacylglycerol: step 2/2. Catalyzes the formation of phosphatidylethanolamine (PtdEtn) from phosphatidylserine (PtdSer). This Chlamydia trachomatis serovar L2 (strain ATCC VR-902B / DSM 19102 / 434/Bu) protein is Phosphatidylserine decarboxylase proenzyme.